Here is a 318-residue protein sequence, read N- to C-terminus: Acetyl-coenzyme A carboxylase carboxyl transferase subunit alpha (318 aa).

Residues lysine 38 to alanine 292 form the CoA carboxyltransferase C-terminal domain.

The protein belongs to the AccA family. In terms of assembly, acetyl-CoA carboxylase is a heterohexamer composed of biotin carboxyl carrier protein (AccB), biotin carboxylase (AccC) and two subunits each of ACCase subunit alpha (AccA) and ACCase subunit beta (AccD).

The protein localises to the cytoplasm. It carries out the reaction N(6)-carboxybiotinyl-L-lysyl-[protein] + acetyl-CoA = N(6)-biotinyl-L-lysyl-[protein] + malonyl-CoA. It functions in the pathway lipid metabolism; malonyl-CoA biosynthesis; malonyl-CoA from acetyl-CoA: step 1/1. Component of the acetyl coenzyme A carboxylase (ACC) complex. First, biotin carboxylase catalyzes the carboxylation of biotin on its carrier protein (BCCP) and then the CO(2) group is transferred by the carboxyltransferase to acetyl-CoA to form malonyl-CoA. The chain is Acetyl-coenzyme A carboxylase carboxyl transferase subunit alpha from Listeria monocytogenes serotype 4b (strain CLIP80459).